Consider the following 405-residue polypeptide: Proline-rich P65 protein (405 aa).

The interval 1 to 58 (MDINKPGWNQSDQQATAYDPNQQQYYGDGSTYYDPDQAVDPNQAYYPDPNTYPDAAAY) is disordered. The segment covering 7–25 (GWNQSDQQATAYDPNQQQY) has biased composition (polar residues). 12 tandem repeats follow at residues 40–45 (DPNQAY), 75–80 (DPNQAY), 83–87 (DPNAY), 89–93 (DPNAY), 95–99 (DPNAY), 101–105 (DPNAY), 107–111 (DPNAY), 119–123 (DPNAY), 140–145 (DPNQAY), 148–152 (DPNAY), 154–158 (DPNAY), and 168–172 (DPNAY). A 12 X 5 AA repeats of D-P-N-Q-A-Y region spans residues 40–172 (DPNQAYYPDP…YVTSTDPNAY (133 aa)).

In terms of processing, the N-terminus is blocked.

It is found in the cell membrane. The chain is Proline-rich P65 protein (p65) from Mycoplasma pneumoniae (strain ATCC 29342 / M129 / Subtype 1) (Mycoplasmoides pneumoniae).